The chain runs to 117 residues: Large ribosomal subunit protein bL20 (117 aa).

Belongs to the bacterial ribosomal protein bL20 family.

Functionally, binds directly to 23S ribosomal RNA and is necessary for the in vitro assembly process of the 50S ribosomal subunit. It is not involved in the protein synthesizing functions of that subunit. In Leptospira interrogans serogroup Icterohaemorrhagiae serovar copenhageni (strain Fiocruz L1-130), this protein is Large ribosomal subunit protein bL20.